The following is a 552-amino-acid chain: Glutamine-dependent NAD(+) synthetase (552 aa).

In terms of domain architecture, CN hydrolase spans 11–253 (LRIAMAQFDF…DQWLVVDYAA (243 aa)). Residue Glu-52 is the Proton acceptor; for glutaminase activity of the active site. The For glutaminase activity role is filled by Lys-119. Tyr-125 lines the L-glutamine pocket. Residue Cys-157 is the Nucleophile; for glutaminase activity of the active site. Residues Ser-183 and Lys-189 each contribute to the L-glutamine site. A ligase region spans residues 275-552 (AWRAVVRGLK…YPITNGYSGQ (278 aa)). 298-305 (GLSGGIDS) serves as a coordination point for ATP. A deamido-NAD(+)-binding site is contributed by Asn-381. ATP is bound at residue Thr-405. Positions 410 and 522 each coordinate deamido-NAD(+).

The protein in the C-terminal section; belongs to the NAD synthetase family.

It carries out the reaction deamido-NAD(+) + L-glutamine + ATP + H2O = L-glutamate + AMP + diphosphate + NAD(+) + H(+). The protein operates within cofactor biosynthesis; NAD(+) biosynthesis; NAD(+) from deamido-NAD(+) (L-Gln route): step 1/1. Its function is as follows. Catalyzes the ATP-dependent amidation of deamido-NAD to form NAD. Uses L-glutamine as a nitrogen source. In Xanthomonas campestris pv. campestris (strain 8004), this protein is Glutamine-dependent NAD(+) synthetase.